The primary structure comprises 258 residues: Regulatory protein RecX (258 aa).

It belongs to the RecX family.

The protein localises to the cytoplasm. In terms of biological role, modulates RecA activity. This chain is Regulatory protein RecX, found in Streptococcus pyogenes serotype M3 (strain ATCC BAA-595 / MGAS315).